The following is a 247-amino-acid chain: 5'-nucleotidase SurE (247 aa).

Aspartate 8, aspartate 9, serine 39, and asparagine 91 together coordinate a divalent metal cation.

It belongs to the SurE nucleotidase family. The cofactor is a divalent metal cation.

The protein localises to the cytoplasm. It carries out the reaction a ribonucleoside 5'-phosphate + H2O = a ribonucleoside + phosphate. Functionally, nucleotidase that shows phosphatase activity on nucleoside 5'-monophosphates. This Nitrosomonas europaea (strain ATCC 19718 / CIP 103999 / KCTC 2705 / NBRC 14298) protein is 5'-nucleotidase SurE.